A 255-amino-acid polypeptide reads, in one-letter code: Fe(3+) dicitrate transport ATP-binding protein FecE (255 aa).

The ABC transporter domain maps to 3–238; sequence LRTENLTVSY…GLLRTVFSVE (236 aa). 35-42 is a binding site for ATP; sequence GPNGCGKS.

It belongs to the ABC transporter superfamily. The complex is composed of two ATP-binding proteins (FecE), two transmembrane proteins (FecC and FecD) and a solute-binding protein (FecB).

It localises to the cell inner membrane. It catalyses the reaction iron(III) dicitrate(out) + ATP + H2O = iron(III) dicitrate(in) + ADP + phosphate + H(+). Its function is as follows. Part of the ABC transporter complex FecBCDE involved in citrate-dependent Fe(3+) uptake. Binds ATP. Probably responsible for energy coupling to the transport system. This is Fe(3+) dicitrate transport ATP-binding protein FecE from Escherichia coli (strain K12).